A 141-amino-acid polypeptide reads, in one-letter code: Cytochrome c-type biogenesis protein CcmE (141 aa).

The Cytoplasmic portion of the chain corresponds to 1-7 (MRARTRR). A helical; Signal-anchor for type II membrane protein transmembrane segment spans residues 8 to 28 (LYTFGIAAALIVAAAALAFFA). At 29–141 (LRENANLFYT…RELKPLEAGG (113 aa)) the chain is on the periplasmic side. Heme-binding residues include histidine 125 and tyrosine 129.

The protein belongs to the CcmE/CycJ family.

It localises to the cell inner membrane. Its function is as follows. Heme chaperone required for the biogenesis of c-type cytochromes. Transiently binds heme delivered by CcmC and transfers the heme to apo-cytochromes in a process facilitated by CcmF and CcmH. The sequence is that of Cytochrome c-type biogenesis protein CcmE from Hyphomonas neptunium (strain ATCC 15444).